Here is a 284-residue protein sequence, read N- to C-terminus: RNase adapter protein RapZ (284 aa).

8–15 (GRSGSGKS) contacts ATP. 56–59 (DVRN) lines the GTP pocket. Residues 266-284 (RSRGKNAQSRHRTLEKSKS) are RNA-binding.

It belongs to the RapZ-like family. RapZ subfamily. As to quaternary structure, homotrimer.

Its function is as follows. Modulates the synthesis of GlmS, by affecting the processing and stability of the regulatory small RNA GlmZ. When glucosamine-6-phosphate (GlcN6P) concentrations are high in the cell, RapZ binds GlmZ and targets it to cleavage by RNase E. Consequently, GlmZ is inactivated and unable to activate GlmS synthesis. Under low GlcN6P concentrations, RapZ is sequestered and inactivated by an other regulatory small RNA, GlmY, preventing GlmZ degradation and leading to synthesis of GlmS. This is RNase adapter protein RapZ from Sodalis glossinidius (strain morsitans).